We begin with the raw amino-acid sequence, 352 residues long: Biotin synthase (352 aa).

Positions 41-268 constitute a Radical SAM core domain; it reads NEVQVSTLLS…ASHVRLSAGR (228 aa). Positions 56, 60, and 63 each coordinate [4Fe-4S] cluster. [2Fe-2S] cluster-binding residues include Cys100, Cys131, Cys191, and Arg263.

This sequence belongs to the radical SAM superfamily. Biotin synthase family. Homodimer. [4Fe-4S] cluster serves as cofactor. Requires [2Fe-2S] cluster as cofactor.

It catalyses the reaction (4R,5S)-dethiobiotin + (sulfur carrier)-SH + 2 reduced [2Fe-2S]-[ferredoxin] + 2 S-adenosyl-L-methionine = (sulfur carrier)-H + biotin + 2 5'-deoxyadenosine + 2 L-methionine + 2 oxidized [2Fe-2S]-[ferredoxin]. It participates in cofactor biosynthesis; biotin biosynthesis; biotin from 7,8-diaminononanoate: step 2/2. In terms of biological role, catalyzes the conversion of dethiobiotin (DTB) to biotin by the insertion of a sulfur atom into dethiobiotin via a radical-based mechanism. The polypeptide is Biotin synthase (Marinobacter nauticus (strain ATCC 700491 / DSM 11845 / VT8) (Marinobacter aquaeolei)).